Here is a 382-residue protein sequence, read N- to C-terminus: uncharacterized protein (382 aa).

Helical transmembrane passes span 8 to 28, 45 to 65, 75 to 95, 102 to 122, 131 to 151, 157 to 177, 204 to 224, 231 to 251, 270 to 290, 291 to 311, 325 to 345, and 349 to 369; these read VMLL…LNTL, MVSS…GYLI, YLAS…VGFW, FIAG…LMCS, LLAA…LLVS, LLHV…PLLF, LGVN…GLMP, GMAN…GILG, VQVF…AMAP, ALFI…AWAC, ALLL…AMLM, and SDNL…LMLL.

Belongs to the major facilitator superfamily. YcaD (TC 2.A.1.26) family.

It localises to the cell inner membrane. This is an uncharacterized protein from Salmonella paratyphi B (strain ATCC BAA-1250 / SPB7).